The primary structure comprises 420 residues: Glucose-1-phosphate adenylyltransferase (420 aa).

Residues Tyr108, Gly173, 188–189 (EK), and Ser206 each bind alpha-D-glucose 1-phosphate.

The protein belongs to the bacterial/plant glucose-1-phosphate adenylyltransferase family. In terms of assembly, homotetramer.

It carries out the reaction alpha-D-glucose 1-phosphate + ATP + H(+) = ADP-alpha-D-glucose + diphosphate. Its pathway is glycan biosynthesis; glycogen biosynthesis. Functionally, involved in the biosynthesis of ADP-glucose, a building block required for the elongation reactions to produce glycogen. Catalyzes the reaction between ATP and alpha-D-glucose 1-phosphate (G1P) to produce pyrophosphate and ADP-Glc. The protein is Glucose-1-phosphate adenylyltransferase of Paraburkholderia phytofirmans (strain DSM 17436 / LMG 22146 / PsJN) (Burkholderia phytofirmans).